A 65-amino-acid chain; its full sequence is Large ribosomal subunit protein bL31 (65 aa).

C16, C18, C36, and C39 together coordinate Zn(2+).

This sequence belongs to the bacterial ribosomal protein bL31 family. Type A subfamily. In terms of assembly, part of the 50S ribosomal subunit. Zn(2+) is required as a cofactor.

Binds the 23S rRNA. This Geotalea uraniireducens (strain Rf4) (Geobacter uraniireducens) protein is Large ribosomal subunit protein bL31.